The sequence spans 494 residues: Sulfate adenylyltransferase subunit 1 (494 aa).

In terms of domain architecture, tr-type G spans 24 to 240 (TRPLRLITCG…LELATVRSAQ (217 aa)). The G1 stretch occupies residues 33–40 (GSVDDGKS). 33 to 40 (GSVDDGKS) provides a ligand contact to GTP. Residues 91-95 (GITID) are G2. The segment at 112–115 (DTPG) is G3. Residues 112–116 (DTPGH) and 167–170 (NKID) contribute to the GTP site. Residues 167–170 (NKID) are G4. The segment at 204 to 206 (SAL) is G5.

It belongs to the TRAFAC class translation factor GTPase superfamily. Classic translation factor GTPase family. CysN/NodQ subfamily. As to quaternary structure, heterodimer composed of CysD, the smaller subunit, and CysN.

It catalyses the reaction sulfate + ATP + H(+) = adenosine 5'-phosphosulfate + diphosphate. The protein operates within sulfur metabolism; hydrogen sulfide biosynthesis; sulfite from sulfate: step 1/3. Its function is as follows. With CysD forms the ATP sulfurylase (ATPS) that catalyzes the adenylation of sulfate producing adenosine 5'-phosphosulfate (APS) and diphosphate, the first enzymatic step in sulfur assimilation pathway. APS synthesis involves the formation of a high-energy phosphoric-sulfuric acid anhydride bond driven by GTP hydrolysis by CysN coupled to ATP hydrolysis by CysD. The polypeptide is Sulfate adenylyltransferase subunit 1 (Rhizobium rhizogenes (strain K84 / ATCC BAA-868) (Agrobacterium radiobacter)).